A 983-amino-acid chain; its full sequence is Protein translocase subunit SecA (983 aa).

ATP is bound by residues Gln-83, 101–105 (GEGKT), and Asp-489. Residues 948-983 (ISSEEENNNEKTNININEDLERTKGEAQQTAKNPNE) are disordered. Over residues 973–983 (EAQQTAKNPNE) the composition is skewed to polar residues.

The protein belongs to the SecA family. As to quaternary structure, monomer and homodimer. Part of the essential Sec protein translocation apparatus which comprises SecA, SecYEG and auxiliary proteins SecDF. Other proteins may also be involved.

It is found in the cell membrane. It localises to the cytoplasm. The enzyme catalyses ATP + H2O + cellular proteinSide 1 = ADP + phosphate + cellular proteinSide 2.. Part of the Sec protein translocase complex. Interacts with the SecYEG preprotein conducting channel. Has a central role in coupling the hydrolysis of ATP to the transfer of proteins into and across the cell membrane, serving as an ATP-driven molecular motor driving the stepwise translocation of polypeptide chains across the membrane. The protein is Protein translocase subunit SecA of Mesomycoplasma hyopneumoniae (strain 7448) (Mycoplasma hyopneumoniae).